We begin with the raw amino-acid sequence, 357 residues long: Tetraacyldisaccharide 4'-kinase (357 aa).

54-61 contributes to the ATP binding site; sequence TVGGAGKT.

It belongs to the LpxK family.

It carries out the reaction a lipid A disaccharide + ATP = a lipid IVA + ADP + H(+). The protein operates within glycolipid biosynthesis; lipid IV(A) biosynthesis; lipid IV(A) from (3R)-3-hydroxytetradecanoyl-[acyl-carrier-protein] and UDP-N-acetyl-alpha-D-glucosamine: step 6/6. Transfers the gamma-phosphate of ATP to the 4'-position of a tetraacyldisaccharide 1-phosphate intermediate (termed DS-1-P) to form tetraacyldisaccharide 1,4'-bis-phosphate (lipid IVA). This is Tetraacyldisaccharide 4'-kinase from Rhizobium leguminosarum bv. trifolii (strain WSM2304).